A 153-amino-acid chain; its full sequence is Endoribonuclease YbeY (153 aa).

The Zn(2+) site is built by His114, His118, and His124.

Belongs to the endoribonuclease YbeY family. Zn(2+) serves as cofactor.

The protein resides in the cytoplasm. In terms of biological role, single strand-specific metallo-endoribonuclease involved in late-stage 70S ribosome quality control and in maturation of the 3' terminus of the 16S rRNA. This chain is Endoribonuclease YbeY, found in Shewanella oneidensis (strain ATCC 700550 / JCM 31522 / CIP 106686 / LMG 19005 / NCIMB 14063 / MR-1).